Here is a 186-residue protein sequence, read N- to C-terminus: Orotate phosphoribosyltransferase (186 aa).

5-phospho-alpha-D-ribose 1-diphosphate is bound by residues arginine 96, lysine 100, histidine 102, and 121 to 129 (DDVATTGTS). Residues threonine 125 and arginine 153 each contribute to the orotate site.

Belongs to the purine/pyrimidine phosphoribosyltransferase family. PyrE subfamily. Homodimer. It depends on Mg(2+) as a cofactor.

The enzyme catalyses orotidine 5'-phosphate + diphosphate = orotate + 5-phospho-alpha-D-ribose 1-diphosphate. It participates in pyrimidine metabolism; UMP biosynthesis via de novo pathway; UMP from orotate: step 1/2. Functionally, catalyzes the transfer of a ribosyl phosphate group from 5-phosphoribose 1-diphosphate to orotate, leading to the formation of orotidine monophosphate (OMP). This Aeropyrum pernix (strain ATCC 700893 / DSM 11879 / JCM 9820 / NBRC 100138 / K1) protein is Orotate phosphoribosyltransferase.